The following is a 753-amino-acid chain: Bile salt-activated lipase (753 aa).

A signal peptide spans 1–20; that stretch reads MGRLQLVVLGLTCCWAVASA. A heparin-binding region spans residues 21 to 121; sequence AKLGAVYTEG…KQVSRDLPVM (101 aa). A disulfide bridge links C84 with C100. N207 carries N-linked (GlcNAc...) (complex) asparagine glycosylation. S214 functions as the Acyl-ester intermediate in the catalytic mechanism. C266 and C277 are joined by a disulfide. Catalysis depends on charge relay system residues D340 and H455. The interval 555 to 753 is disordered; the sequence is QEATPVPPTG…EAQMPAVIRF (199 aa). T558, T569, and T579 each carry an O-linked (GalNAc...) threonine glycan. 17 repeat units span residues 559-569, 570-580, 581-591, 592-602, 603-613, 614-624, 625-635, 636-646, 647-657, 658-668, 669-679, 680-690, 691-701, 702-712, 713-723, 724-734, and 735-745. The tract at residues 559–745 is 17 X 11 AA tandem repeats, glycodomain, O-linked (mucin type); sequence PVPPTGDSEA…VPPTDDSKEA (187 aa). 7 O-linked (GalNAc...) threonine glycosylation sites follow: T607, T618, T629, T640, T651, T662, and T673. Pro residues predominate over residues 668–683; sequence PPVPPTGDAGPPPVPP.

This sequence belongs to the type-B carboxylesterase/lipase family. Interacts with CLC. Post-translationally, N- and O-glycosylated. As to expression, mammary gland and pancreas. Detected in pancreatic and duodenal juice (at protein level). Expressed by eosinophils.

The protein localises to the secreted. The catalysed reaction is a triacylglycerol + H2O = a diacylglycerol + a fatty acid + H(+). It catalyses the reaction 1,2,3-tri-(9Z-octadecenoyl)-glycerol + H2O = di-(9Z)-octadecenoylglycerol + (9Z)-octadecenoate + H(+). The enzyme catalyses 1,2,3-trioctanoylglycerol + H2O = dioctanoylglycerol + octanoate + H(+). It carries out the reaction a sterol ester + H2O = a sterol + a fatty acid + H(+). The catalysed reaction is cholesteryl (9Z-octadecenoate) + H2O = cholesterol + (9Z)-octadecenoate + H(+). It catalyses the reaction an acetyl ester + H2O = an aliphatic alcohol + acetate + H(+). The enzyme catalyses a butanoate ester + H2O = an aliphatic alcohol + butanoate + H(+). It carries out the reaction 9-hexadecanoyloxy-octadecanoate + H2O = 9-hydroxy-octadecanoate + hexadecanoate + H(+). The catalysed reaction is 9-(9Z-octadecenoyloxy)-octadecanoate + H2O = 9-hydroxy-octadecanoate + (9Z)-octadecenoate + H(+). It catalyses the reaction 1-hexadecanoyl-sn-glycero-3-phosphocholine + H2O = sn-glycerol 3-phosphocholine + hexadecanoate + H(+). The enzyme catalyses 12-hexadecanoyloxy-octadecanoate + H2O = 12-hydroxyoctadecanoate + hexadecanoate + H(+). It carries out the reaction 12-(9Z-octadecenoyloxy)-octadecanoate + H2O = 12-hydroxyoctadecanoate + (9Z)-octadecenoate + H(+). The catalysed reaction is 13-(9Z-octadecenoyloxy)-octadecanoate + H2O = 13-hydroxy-octadecanoate + (9Z)-octadecenoate + H(+). It catalyses the reaction 9-(9Z-hexadecenoyloxy)-octadecanoate + H2O = (9Z)-hexadecenoate + 9-hydroxy-octadecanoate + H(+). The enzyme catalyses 12-(9Z-hexadecenoyloxy)-octadecanoate + H2O = 12-hydroxyoctadecanoate + (9Z)-hexadecenoate + H(+). It carries out the reaction 13-(9Z-hexadecenoyloxy)-octadecanoate + H2O = 13-hydroxy-octadecanoate + (9Z)-hexadecenoate + H(+). The catalysed reaction is 12-octadecanoyloxy-octadecanoate + H2O = 12-hydroxyoctadecanoate + octadecanoate + H(+). It catalyses the reaction 13-octadecanoyloxy-octadecanoate + H2O = 13-hydroxy-octadecanoate + octadecanoate + H(+). The enzyme catalyses 5-(9Z-hexadecenoyloxy)-octadecanoate + H2O = 5-hydroxy-octadecanoate + (9Z)-hexadecenoate + H(+). It carries out the reaction 9-octadecanoyloxy-octadecanoate + H2O = 9-hydroxy-octadecanoate + octadecanoate + H(+). With respect to regulation, activated by bile salts such as sodium taurocholate. Functionally, catalyzes the hydrolysis of a wide range of substrates including cholesteryl esters, phospholipids, lysophospholipids, di- and tri-acylglycerols, and fatty acid esters of hydroxy fatty acids (FAHFAs). Preferentially hydrolyzes FAHFAs with the ester bond further away from the carboxylate. Unsaturated FAHFAs are hydrolyzed more quickly than saturated FAHFAs. Has an essential role in the complete digestion of dietary lipids and their intestinal absorption, along with the absorption of fat-soluble vitamins. This is Bile salt-activated lipase (CEL) from Homo sapiens (Human).